The primary structure comprises 263 residues: Peptidoglycan-N-acetylmuramic acid deacetylase PdaA (263 aa).

The N-terminal stretch at 1–23 is a signal peptide; it reads MKWMCSICCAAVLLAGGAAQAEA. A NodB homology domain is found at 66 to 247; the sequence is KTIYLTFDNG…DLKKQGYTFK (182 aa). D73 acts as the Proton acceptor in catalysis. H124 and H128 together coordinate a divalent metal cation. H222 acts as the Proton donor in catalysis.

It belongs to the polysaccharide deacetylase family.

Functionally, catalyzes the deacetylation of N-acetylmuramic acid (MurNAc) residues in glycan strands of peptidoglycan, leading to the formation of muramic delta-lactam residues in spore cortex, after transpeptidation of deacetylated muramic acid residues. PdaA probably carries out both deacetylation and lactam ring formation and requires the product of CwlD activity on peptidoglycan as a substrate. Is required for germination. Cannot use chitin oligomer (hexa-N-acetylchitohexaose) as a substrate. The protein is Peptidoglycan-N-acetylmuramic acid deacetylase PdaA (pdaA) of Bacillus subtilis (strain 168).